Reading from the N-terminus, the 154-residue chain is Myoglobin (154 aa).

Residues 2 to 148 form the Globin domain; sequence GLSEAEWQLV…FRKDIAAKYK (147 aa). Serine 4 is modified (phosphoserine). Nitrite is bound at residue histidine 65. Histidine 65 is an O2 binding site. Position 68 is a phosphothreonine (threonine 68). Histidine 94 contributes to the heme b binding site.

Belongs to the globin family. Monomeric.

The protein resides in the cytoplasm. Its subcellular location is the sarcoplasm. It catalyses the reaction Fe(III)-heme b-[protein] + nitric oxide + H2O = Fe(II)-heme b-[protein] + nitrite + 2 H(+). The catalysed reaction is H2O2 + AH2 = A + 2 H2O. Its function is as follows. Monomeric heme protein which primary function is to store oxygen and facilitate its diffusion within muscle tissues. Reversibly binds oxygen through a pentacoordinated heme iron and enables its timely and efficient release as needed during periods of heightened demand. Depending on the oxidative conditions of tissues and cells, and in addition to its ability to bind oxygen, it also has a nitrite reductase activity whereby it regulates the production of bioactive nitric oxide. Under stress conditions, like hypoxia and anoxia, it also protects cells against reactive oxygen species thanks to its pseudoperoxidase activity. In Indopacetus pacificus (Longman's beaked whale), this protein is Myoglobin (MB).